Here is a 315-residue protein sequence, read N- to C-terminus: Protein phosphatase PTC7 homolog fig (315 aa).

One can recognise a PPM-type phosphatase domain in the interval 54-309; it reads KHSIASAKDN…DDITVILATV (256 aa). Mn(2+)-binding residues include D86, G87, and D231.

The protein belongs to the PP2C family. Requires Mg(2+) as cofactor. Mn(2+) serves as cofactor.

It catalyses the reaction O-phospho-L-seryl-[protein] + H2O = L-seryl-[protein] + phosphate. The enzyme catalyses O-phospho-L-threonyl-[protein] + H2O = L-threonyl-[protein] + phosphate. The protein is Protein phosphatase PTC7 homolog fig of Drosophila willistoni (Fruit fly).